Consider the following 237-residue polypeptide: MQLTEQQQDKLSKVQLEESWKRSLTPFLLSPYMDSLRDFLFQQKQAQKTIYPPSKQIFNALNITPLDHVKVVILGQDPYHGPNQANGLSFSVQRGVALPPSLRNIFHELHTDLGVPVSRHGDLTKWAEQGVLLLNSVLTVEAGQPTSHQKQGWEEFTDAVIDVLNEQREHIVFILWGAYAQRKGQRINREKHLVLTAAHPSPLAANRGGFFGCKVFSKTNQYLKQHGIEPIDWQLDA.

Catalysis depends on Asp77, which acts as the Proton acceptor.

This sequence belongs to the uracil-DNA glycosylase (UDG) superfamily. UNG family.

The protein resides in the cytoplasm. It carries out the reaction Hydrolyzes single-stranded DNA or mismatched double-stranded DNA and polynucleotides, releasing free uracil.. Its function is as follows. Excises uracil residues from the DNA which can arise as a result of misincorporation of dUMP residues by DNA polymerase or due to deamination of cytosine. In Acinetobacter baumannii (strain ACICU), this protein is Uracil-DNA glycosylase.